The primary structure comprises 504 residues: MSFSVDVLANIAIELQRGIGHQDRFQRLITTLRQVLECDASALLRYDSRQFIPLAIDGLAKDVLGRRFALEGHPRLEAIARAGDVVRFPADSELPDPYDGLIPGQESLKVHACVGLPLFAGQNLIGALTLDGMQPDQFDVFSNEELRLIAALAAGALSNALLIEQLESQNMLPGDAASFEAVKQTQMIGLSPGMTQLKKEIEIVAASDLNVLISGETGTGKELVAKAIHEASPRAVNPLVYLNCAALPESVAESELFGHVKGAFTGAISNRSGKFEMADNGTLFLDEIGELSLALQAKLLRVLQYGDIQRVGDDRSLRVDVRVLAATNRDLREEVLAGRFRADLFHRLSVFPLSVPPLRERGDDVILLAGYFCEQCRLRLGLSRVVLSAGARNLLQHYNFPGNVRELEHAIHRAVVLARATRSGDEVILEAQHFAFPEVTLPPPEVAAVPVVKQNLREATEAFQRETIRQALAQNHHNWAACARMLETDVANLHRLAKRLGLKD.

The residue at position 57 (Asp57) is a 4-aspartylphosphate. One can recognise a Sigma-54 factor interaction domain in the interval 187-416; that stretch reads MIGLSPGMTQ…LEHAIHRAVV (230 aa). ATP-binding positions include 215–222 and 278–287; these read GETGTGKE and ADNGTLFLDE. Residues 479-498 constitute a DNA-binding region (H-T-H motif); it reads WAACARMLETDVANLHRLAK.

The protein operates within nitrogen metabolism; nitric oxide reduction. In terms of biological role, required for the expression of anaerobic nitric oxide (NO) reductase, acts as a transcriptional activator for at least the norVW operon. Activation also requires sigma-54. The sequence is that of Anaerobic nitric oxide reductase transcription regulator NorR from Escherichia coli O81 (strain ED1a).